Consider the following 381-residue polypeptide: Cytochrome b (381 aa).

The next 4 membrane-spanning stretches (helical) occupy residues 34–54 (FGSL…FLAM), 78–99 (WLIR…YIHI), 114–134 (WNIG…GYVL), and 179–199 (FFAF…IHVL). Residues histidine 84 and histidine 98 each coordinate heme b. Residues histidine 183 and histidine 197 each contribute to the heme b site. Residue histidine 202 coordinates a ubiquinone. 4 consecutive transmembrane segments (helical) span residues 227 to 247 (YKDA…ALFL), 289 to 309 (LGGV…PLLH), 321 to 341 (LTQV…WIGG), and 348 to 368 (FILI…IAMP).

The protein belongs to the cytochrome b family. As to quaternary structure, the cytochrome bc1 complex contains 3 respiratory subunits (MT-CYB, CYC1 and UQCRFS1), 2 core proteins (UQCRC1 and UQCRC2) and probably 6 low-molecular weight proteins. The cofactor is heme b.

The protein resides in the mitochondrion inner membrane. Its function is as follows. Component of the ubiquinol-cytochrome c reductase complex (complex III or cytochrome b-c1 complex) that is part of the mitochondrial respiratory chain. The b-c1 complex mediates electron transfer from ubiquinol to cytochrome c. Contributes to the generation of a proton gradient across the mitochondrial membrane that is then used for ATP synthesis. The protein is Cytochrome b (mt-cyb) of Isurus paucus (Longfin mako shark).